The sequence spans 185 residues: MSSDGTPGRKRSAKVRSSVSGLEIEVLREAGDWESSTDETVRRAAEHAYAVARGDESAELCIVLGDDALVAKLNKAYRGKEGPTNVLSFPAAEMPDTGAPEAVFGGATPLLGDVVLARETIAREALDQNKKFADHLSHLTVHGVLHLLGHDHMEDVDADEMEALERDILEDLGIADPYGADHPGQ.

3 residues coordinate Zn(2+): histidine 142, histidine 146, and histidine 152.

The protein belongs to the endoribonuclease YbeY family. The cofactor is Zn(2+).

It is found in the cytoplasm. Its function is as follows. Single strand-specific metallo-endoribonuclease involved in late-stage 70S ribosome quality control and in maturation of the 3' terminus of the 16S rRNA. The polypeptide is Endoribonuclease YbeY (Parvibaculum lavamentivorans (strain DS-1 / DSM 13023 / NCIMB 13966)).